The sequence spans 201 residues: Putative ankyrin repeat protein YahD (201 aa).

6 ANK repeats span residues 5–34 (NLPA…DINT), 38–67 (QGKT…DINK), 71–100 (TCLN…DLNC), 104–134 (FGGV…NVNQ), 138–172 (VGWT…SPHL), and 176–201 (YGKT…AAGA).

In Escherichia coli (strain K12), this protein is Putative ankyrin repeat protein YahD (yahD).